A 226-amino-acid chain; its full sequence is MNENLFTSFITPVILGLPLVTLIVLFPSLLFPTSNRLVSNRFVTLQQWMLQLVSKQMMSIHNSKGQTWTLMLMSLILFIGSTNLLGLLPHSFTPTTQLSMNLGMAIPLWAGAVITGFRNKTKASLAHFLPQGTPTPLIPMLVIIETISLFIQPMALAVRLTANITAGHLLIHLIGGATLALMSISTTTALITFTILILLTILEFAVAMIQAYVFTLLVSLYLHDNT.

The residue at position 1 (methionine 1) is an N-formylmethionine. Helical transmembrane passes span 9-29 (FITP…FPSL), 68-88 (WTLM…LGLL), 97-117 (QLSM…ITGF), 138-158 (IPML…ALAV), 164-184 (ITAG…LMSI), and 189-209 (ALIT…VAMI).

Belongs to the ATPase A chain family. Component of the ATP synthase complex composed at least of ATP5F1A/subunit alpha, ATP5F1B/subunit beta, ATP5MC1/subunit c (homooctomer), MT-ATP6/subunit a, MT-ATP8/subunit 8, ATP5ME/subunit e, ATP5MF/subunit f, ATP5MG/subunit g, ATP5MK/subunit k, ATP5MJ/subunit j, ATP5F1C/subunit gamma, ATP5F1D/subunit delta, ATP5F1E/subunit epsilon, ATP5PF/subunit F6, ATP5PB/subunit b, ATP5PD/subunit d, ATP5PO/subunit OSCP. ATP synthase complex consists of a soluble F(1) head domain (subunits alpha(3) and beta(3)) - the catalytic core - and a membrane F(0) domain - the membrane proton channel (subunits c, a, 8, e, f, g, k and j). These two domains are linked by a central stalk (subunits gamma, delta, and epsilon) rotating inside the F1 region and a stationary peripheral stalk (subunits F6, b, d, and OSCP). Interacts with DNAJC30; interaction is direct.

Its subcellular location is the mitochondrion inner membrane. The enzyme catalyses H(+)(in) = H(+)(out). Functionally, subunit a, of the mitochondrial membrane ATP synthase complex (F(1)F(0) ATP synthase or Complex V) that produces ATP from ADP in the presence of a proton gradient across the membrane which is generated by electron transport complexes of the respiratory chain. ATP synthase complex consist of a soluble F(1) head domain - the catalytic core - and a membrane F(1) domain - the membrane proton channel. These two domains are linked by a central stalk rotating inside the F(1) region and a stationary peripheral stalk. During catalysis, ATP synthesis in the catalytic domain of F(1) is coupled via a rotary mechanism of the central stalk subunits to proton translocation. With the subunit c (ATP5MC1), forms the proton-conducting channel in the F(0) domain, that contains two crucial half-channels (inlet and outlet) that facilitate proton movement from the mitochondrial intermembrane space (IMS) into the matrix. Protons are taken up via the inlet half-channel and released through the outlet half-channel, following a Grotthuss mechanism. In Bos taurus (Bovine), this protein is ATP synthase F(0) complex subunit a.